The sequence spans 497 residues: Angiopoietin-1 (497 aa).

Residues 1-19 form the signal peptide; that stretch reads MTVFLSFAFFAAILTHIGC. A coiled-coil region spans residues 81–119; it reads QKLQHLEHVMENYTQWLQKLENYIVENMKSEMAQIQQNA. 5 N-linked (GlcNAc...) asparagine glycosylation sites follow: Asn-92, Asn-122, Asn-154, Asn-243, and Asn-294. The stretch at 153–261 forms a coiled coil; the sequence is LNQTSRLEIQ…LELMDTVHNL (109 aa). Residues 276-496 enclose the Fibrinogen C-terminal domain; sequence REEEKPFRDC…STTMMIRPLD (221 aa). 2 cysteine pairs are disulfide-bonded: Cys-285-Cys-314 and Cys-438-Cys-451.

In terms of assembly, homooligomer. Interacts with TEK/TIE2. Interacts with SVEP1/polydom. Interacts with THBD; this interaction significantly inhibits the generation of activated PC and TAFIa/CPB2 by the thrombin/thrombomodulin complex.

Its subcellular location is the secreted. Binds and activates TIE2 receptor by inducing its tyrosine phosphorylation. Implicated in endothelial developmental processes later and distinct from that of VEGF. Appears to play a crucial role in mediating reciprocal interactions between the endothelium and surrounding matrix and mesenchyme. Mediates blood vessel maturation/stability. It may play an important role in the heart early development. This is Angiopoietin-1 (Angpt1) from Rattus norvegicus (Rat).